A 176-amino-acid chain; its full sequence is Transcription factor E (176 aa).

Residues 5–89 enclose the HTH TFE/IIEalpha-type domain; sequence IDQLMKDMAR…YWKANVDQIN (85 aa).

This sequence belongs to the TFE family. In terms of assembly, monomer. Interaction with RNA polymerase subunits RpoF and RpoE is necessary for Tfe stimulatory transcription activity. Able to interact with Tbp and RNA polymerase in the absence of DNA promoter. Interacts both with the preinitiation and elongation complexes.

Functionally, transcription factor that plays a role in the activation of archaeal genes transcribed by RNA polymerase. Facilitates transcription initiation by enhancing TATA-box recognition by TATA-box-binding protein (Tbp), and transcription factor B (Tfb) and RNA polymerase recruitment. Not absolutely required for transcription in vitro, but particularly important in cases where Tbp or Tfb function is not optimal. It dynamically alters the nucleic acid-binding properties of RNA polymerases by stabilizing the initiation complex and destabilizing elongation complexes. Seems to translocate with the RNA polymerase following initiation and acts by binding to the non template strand of the transcription bubble in elongation complexes. In Metallosphaera sedula (strain ATCC 51363 / DSM 5348 / JCM 9185 / NBRC 15509 / TH2), this protein is Transcription factor E.